Reading from the N-terminus, the 238-residue chain is Orotidine 5'-phosphate decarboxylase (238 aa).

Substrate is bound by residues Asp10, Lys32, 59 to 68 (DLKLHDIPNT), Thr122, Arg184, Gln193, Gly213, and Arg214. Lys61 (proton donor) is an active-site residue.

This sequence belongs to the OMP decarboxylase family. Type 1 subfamily. As to quaternary structure, homodimer.

It catalyses the reaction orotidine 5'-phosphate + H(+) = UMP + CO2. It functions in the pathway pyrimidine metabolism; UMP biosynthesis via de novo pathway; UMP from orotate: step 2/2. Catalyzes the decarboxylation of orotidine 5'-monophosphate (OMP) to uridine 5'-monophosphate (UMP). In Bacillus cereus (strain ZK / E33L), this protein is Orotidine 5'-phosphate decarboxylase.